Consider the following 342-residue polypeptide: Probable long-chain-alcohol O-fatty-acyltransferase 3 (342 aa).

8 helical membrane-spanning segments follow: residues 9–29, 36–56, 58–78, 115–135, 153–173, 227–247, 255–275, and 297–317; these read IKLW…STGI, LLSV…FSYV, FSGC…ILFS, IPIW…QMYE, IFLE…ITLG, MFLG…MLFF, TGEV…EVAV, and VGFV…SGII.

It belongs to the wax synthase family.

It localises to the membrane. It carries out the reaction a long chain fatty alcohol + a fatty acyl-CoA = a wax ester + CoA. Catalyzes the final step in the synthesis of long-chain linear esters (waxes). The protein is Probable long-chain-alcohol O-fatty-acyltransferase 3 (AT3) of Arabidopsis thaliana (Mouse-ear cress).